Reading from the N-terminus, the 274-residue chain is Large ribosomal subunit protein uL2cz/uL2cy (274 aa).

Disordered regions lie at residues 1–21 (MAIH…VDSQ) and 225–274 (PVDH…RRSK).

This sequence belongs to the universal ribosomal protein uL2 family. In terms of assembly, part of the 50S ribosomal subunit.

The protein localises to the plastid. Its subcellular location is the chloroplast. This chain is Large ribosomal subunit protein uL2cz/uL2cy (rpl2-A), found in Gossypium barbadense (Sea Island cotton).